The primary structure comprises 351 residues: D-alanine--D-alanine ligase (351 aa).

An ATP-grasp domain is found at 135 to 343; that stretch reads NQIFLQSGQK…MEEVFADLIE (209 aa). 167 to 222 is an ATP binding site; sequence LMSLGFPQFLKPVEGGSSVSTYKITNQEQLSRQLALIFESDSKVMSQSFLAGTEVS. Positions 298, 310, and 312 each coordinate Mg(2+).

This sequence belongs to the D-alanine--D-alanine ligase family. Mg(2+) serves as cofactor. Requires Mn(2+) as cofactor.

Its subcellular location is the cytoplasm. It carries out the reaction 2 D-alanine + ATP = D-alanyl-D-alanine + ADP + phosphate + H(+). It participates in cell wall biogenesis; peptidoglycan biosynthesis. Cell wall formation. This Leptospira borgpetersenii serovar Hardjo-bovis (strain JB197) protein is D-alanine--D-alanine ligase.